A 516-amino-acid polypeptide reads, in one-letter code: 2-isopropylmalate synthase (516 aa).

A Pyruvate carboxyltransferase domain is found at isoleucine 5–histidine 267. Mn(2+) contacts are provided by aspartate 14, histidine 202, histidine 204, and asparagine 238. Residues lysine 393 to lysine 516 form a regulatory domain region.

It belongs to the alpha-IPM synthase/homocitrate synthase family. LeuA type 1 subfamily. In terms of assembly, homodimer. The cofactor is Mn(2+).

The protein resides in the cytoplasm. It carries out the reaction 3-methyl-2-oxobutanoate + acetyl-CoA + H2O = (2S)-2-isopropylmalate + CoA + H(+). Its pathway is amino-acid biosynthesis; L-leucine biosynthesis; L-leucine from 3-methyl-2-oxobutanoate: step 1/4. Its function is as follows. Catalyzes the condensation of the acetyl group of acetyl-CoA with 3-methyl-2-oxobutanoate (2-ketoisovalerate) to form 3-carboxy-3-hydroxy-4-methylpentanoate (2-isopropylmalate). The chain is 2-isopropylmalate synthase from Buchnera aphidicola subsp. Cinara cedri (strain Cc).